A 221-amino-acid polypeptide reads, in one-letter code: Josephin-like protein (221 aa).

Residues 1-37 (MESPSARTLGNSLGDDSGNGNENGNGSGNGNTTMMPH) form a disordered region. The span at 9 to 20 (LGNSLGDDSGNG) shows a compositional bias: low complexity. The Josephin domain maps to 36–214 (PHGIYHERQT…DCKDKSQQRW (179 aa)). Catalysis depends on Cys-49, which acts as the Nucleophile. His-152 functions as the Proton acceptor in the catalytic mechanism.

It carries out the reaction Thiol-dependent hydrolysis of ester, thioester, amide, peptide and isopeptide bonds formed by the C-terminal Gly of ubiquitin (a 76-residue protein attached to proteins as an intracellular targeting signal).. May act as a deubiquitinating enzyme. The chain is Josephin-like protein from Drosophila melanogaster (Fruit fly).